The following is a 72-amino-acid chain: Small ribosomal subunit protein bS20 (72 aa).

It belongs to the bacterial ribosomal protein bS20 family.

In terms of biological role, binds directly to 16S ribosomal RNA. This Aeromonas hydrophila protein is Small ribosomal subunit protein bS20 (rpsT).